A 301-amino-acid chain; its full sequence is Ribosomal RNA small subunit methyltransferase H (301 aa).

Residues 35-37 (GGH), Asp-55, Phe-84, Asp-105, and Gln-112 contribute to the S-adenosyl-L-methionine site.

It belongs to the methyltransferase superfamily. RsmH family.

The protein localises to the cytoplasm. The enzyme catalyses cytidine(1402) in 16S rRNA + S-adenosyl-L-methionine = N(4)-methylcytidine(1402) in 16S rRNA + S-adenosyl-L-homocysteine + H(+). Functionally, specifically methylates the N4 position of cytidine in position 1402 (C1402) of 16S rRNA. The sequence is that of Ribosomal RNA small subunit methyltransferase H from Chloroflexus aurantiacus (strain ATCC 29366 / DSM 635 / J-10-fl).